Here is a 169-residue protein sequence, read N- to C-terminus: GYLGAPAVYAPGAPIAARAYAAPVAYAAPALRAAPVAYAAPAVAKVAAPVAYAAPAAVAAEYDPNPQYSYAYNVQDALTGDSKAQQETRDGDVVQGSYSLVEPDGSIRTVDYTADPVNGFNAVVHKEAGAHPAPVVAKVAAPVAYAAPAIAKVAAPLAYAAPAYGKASH.

Repeat copies occupy residues 21 to 24 (AAPV), 27 to 30 (AAPA), 33 to 36 (AAPV), 39 to 42 (AAPA), 47 to 50 (AAPV), and 53 to 56 (AAPA). The region spanning 65-135 (NPQYSYAYNV…KEAGAHPAPV (71 aa)) is the Chitin-binding type R&amp;R domain. 3 tandem repeats follow at residues 140-143 (AAPV), 146-149 (AAPA), and 160-163 (AAPA).

Functionally, component of the cuticle of migratory locust which contains more than 100 different structural proteins. The polypeptide is Cuticle protein 21 (ACP21) (Locusta migratoria (Migratory locust)).